The sequence spans 302 residues: 33 kDa chaperonin (302 aa).

Disulfide bonds link cysteine 247/cysteine 249 and cysteine 280/cysteine 283.

Belongs to the HSP33 family. Post-translationally, under oxidizing conditions two disulfide bonds are formed involving the reactive cysteines. Under reducing conditions zinc is bound to the reactive cysteines and the protein is inactive.

The protein resides in the cytoplasm. Redox regulated molecular chaperone. Protects both thermally unfolding and oxidatively damaged proteins from irreversible aggregation. Plays an important role in the bacterial defense system toward oxidative stress. The sequence is that of 33 kDa chaperonin from Prochlorococcus marinus (strain MIT 9301).